The sequence spans 977 residues: SLIT and NTRK-like protein 3 (977 aa).

The first 26 residues, 1 to 26 (MKPSIAEMLHRGRMLWIILLSTIALG), serve as a signal peptide directing secretion. At 29-654 (TPIPLIEDSE…SPPGGPVPLS (626 aa)) the chain is on the extracellular side. Asn-68 is a glycosylation site (N-linked (GlcNAc...) asparagine). LRR repeat units lie at residues 78-99 (RPFK…SFLH), 102-123 (NAVS…AFNG), 126-147 (ILKR…TFLG), 150-171 (SLEY…AFRN), 174-195 (KLRV…LFKA), and 197-218 (SLTH…GMLD). The LRRCT 1 domain occupies 232-283 (NPWNCTCEIVQLKSWLERIPYTALVGDITCETPFHFHGKDLREIRKTELCPL). The interval 325–360 (EYKSSNKQPKPTKQPRTPRPPSTSQALYPGPNQPPI) is disordered. The LRRNT domain maps to 364–406 (QTRPPIPIICPTGCTCNLHINDLGLTVNCKERGFNNISELLPR). LRR repeat units follow at residues 409-430 (NAKK…DFWN), 433-454 (SLDL…AFIN), 457-478 (NLKS…MFRG), 481-502 (SLHY…AFSL), 505-526 (NLKL…AFAG), and 528-549 (SLAR…GVLE). The region spanning 562-613 (NPWDCTCDLVPFKQWIETISSVSVVGDVLCRSPENLTHRDVRTIELEVLCPE) is the LRRCT 2 domain. An N-linked (GlcNAc...) asparagine glycan is attached at Asn-596. The helical transmembrane segment at 655–675 (VLILSLLVLFFSAVFVAAGLF) threads the bilayer. Topologically, residues 676–977 (AYVLRRRRKK…EVLEKTTYRF (302 aa)) are cytoplasmic. Disordered regions lie at residues 708-735 (LFED…KAPP) and 761-790 (EEEV…MGEA). Positions 711–724 (DGGGGGGGSGGGGR) are enriched in gly residues. Residues 765 to 775 (AVSSAQEAGSA) show a composition bias toward low complexity.

Belongs to the SLITRK family. Expressed in the occipital lobe of the cerebral cortex of the brain. Expressed at higher levels in some astrocytic brain tumors such as astrocytomas, oligodendrogliomas, glioblastomas, gangliogliomas and primitive neuroectodermal tumors.

It is found in the membrane. Functionally, suppresses neurite outgrowth. The polypeptide is SLIT and NTRK-like protein 3 (SLITRK3) (Homo sapiens (Human)).